Here is a 127-residue protein sequence, read N- to C-terminus: Apolipoprotein C-IV (127 aa).

The first 27 residues, methionine 1–cysteine 27, serve as a signal peptide directing secretion. Asparagine 63 carries N-linked (GlcNAc...) asparagine glycosylation.

Belongs to the apolipoprotein C4 family.

Its subcellular location is the secreted. Its function is as follows. May participate in lipoprotein metabolism. This Colobus guereza (Mantled guereza) protein is Apolipoprotein C-IV (APOC4).